The primary structure comprises 109 residues: Parvalbumin alpha (109 aa).

2 consecutive EF-hand domains span residues Lys-38–His-73 and Leu-77–Ala-109. The Ca(2+) site is built by Asp-51, Asp-53, Ser-55, Glu-62, Asp-90, Asp-92, Asp-94, Lys-96, and Glu-101.

It belongs to the parvalbumin family.

Its function is as follows. In muscle, parvalbumin is thought to be involved in relaxation after contraction. It binds two calcium ions. The chain is Parvalbumin alpha from Triakis semifasciata (Leopard shark).